We begin with the raw amino-acid sequence, 154 residues long: UPF0225 protein Asuc_0343 (154 aa).

This sequence belongs to the UPF0225 family.

This chain is UPF0225 protein Asuc_0343, found in Actinobacillus succinogenes (strain ATCC 55618 / DSM 22257 / CCUG 43843 / 130Z).